The chain runs to 523 residues: Metalloendopeptidase OMA1, mitochondrial (523 aa).

Residues 1-45 constitute a mitochondrion transit peptide; that stretch reads MSFIYGLQSAARNCFFFRFNLLTNWRKCNTQAVTSRDFHQVKINH. The propeptide occupies 46-143; sequence IVNKSLGLGV…RSFHTSPRCQ (98 aa). Topologically, residues 144–195 are mitochondrial matrix; the sequence is AAPAPLLLMILKPAQKLLAIIVGRGIRKWWQALPPNKKELFKESLRKNKWKL. The interval 148–167 is cardiolipin-binding; sequence PLLLMILKPAQKLLAIIVGR. The interval 165 to 195 is stress-sensor region; it reads VGRGIRKWWQALPPNKKELFKESLRKNKWKL. The chain crosses the membrane as a helical span at residues 196–216; the sequence is FLGLSSFGLLFVVFYFTHLEV. Position 327 (H327) interacts with Zn(2+). E328 is an active-site residue. Residues H331 and E392 each coordinate Zn(2+). C407 and C465 are disulfide-bonded.

It belongs to the peptidase M48 family. In terms of assembly, homooligomer. Zn(2+) is required as a cofactor. Autocatalytically cleaved in response to mitochondrial depolarization both at the N-terminus and C-terminus to generate the short active form (S-OMA1). Autocatalytic processing at the C-terminus takes place at residues 447-456. The S-OMA1 form is unstable. OMA1 pre-processing by AFG3L2 may participate in maturation before OMA1 autocatalytic cleavage. Degraded by YMEL1 in response to membrane depolarization. Protein turnover is regulated by prohibitin (PHB and PHB2), which promotes degradation of OMA1 in a cardiolipin-binding manner. Post-translationally, may form a redox-dependent disulfide bond. Exists in a semi-oxidized state and is activated by prolonged hypoxia.

The protein localises to the mitochondrion inner membrane. With respect to regulation, protease activity is activated upon autocatalytic cleavage in response to mitochondrial depolarization. Its function is as follows. Metalloprotease that is part of the quality control system in the inner membrane of mitochondria. Activated in response to various mitochondrial stress, leading to the proteolytic cleavage of target proteins, such as OPA1, UQCC3 and DELE1. Involved in the fusion of the mitochondrial inner membranes by mediating cleavage of OPA1 at S1 position, generating the soluble OPA1 (S-OPA1), which cooperates with the membrane form (L-OPA1) to coordinate the fusion of mitochondrial inner membranes. Following stress conditions that induce loss of mitochondrial membrane potential, mediates cleavage of OPA1, leading to excess production of soluble OPA1 (S-OPA1) and negative regulation of mitochondrial fusion. Involved in mitochondrial safeguard in response to transient mitochondrial membrane depolarization (flickering) by catalyzing cleavage of OPA1, leading to excess production of S-OPA1, preventing mitochondrial hyperfusion. Also acts as a regulator of apoptosis: upon BAK and BAX aggregation, mediates cleavage of OPA1, leading to the remodeling of mitochondrial cristae and allowing the release of cytochrome c from mitochondrial cristae. In depolarized mitochondria, may also act as a backup protease for PINK1 by mediating PINK1 cleavage and promoting its subsequent degradation by the proteasome. May also cleave UQCC3 in response to mitochondrial depolarization. Also acts as an activator of the integrated stress response (ISR): in response to mitochondrial stress, mediates cleavage of DELE1 to generate the processed form of DELE1 (S-DELE1), which translocates to the cytosol and activates EIF2AK1/HRI to trigger the ISR. Its role in mitochondrial quality control is essential for regulating lipid metabolism as well as to maintain body temperature and energy expenditure under cold-stress conditions. Binds cardiolipin, possibly regulating its protein turnover. Required for the stability of the respiratory supercomplexes. The protein is Metalloendopeptidase OMA1, mitochondrial of Bos taurus (Bovine).